Reading from the N-terminus, the 282-residue chain is uncharacterized protein (282 aa).

Residue tyrosine 50 is the Proton donor of the active site. Histidine 115 is a binding site for substrate.

This sequence belongs to the aldo/keto reductase family.

This is an uncharacterized protein from Saccharomyces cerevisiae (strain ATCC 204508 / S288c) (Baker's yeast).